The chain runs to 384 residues: MTWQQRITTALEKRRATDAFRVRTVVEGGAGRFLIRDQCQFCNFSSNDYLGLSQHPAIVRAWQDGAERYGVGSGGSGHVSGYTTAHHALEESLADWLGYSRALLFISGFAANQALIAALMEKDDRIVADRLSHASLLEAANLSPAQLRRFAHNDASQLNTLLEKPCDGQQLVVTEGVFSMDGDSAPLGDVQATAQRHSAWLLVDDAHGIGVLGDEGRGSAFSQHVQPEVLVVTFGKGFGVSGAAVLCSDSVADYLLQFARHLIYSTSMPPAQAVALQAALKVIRSDDGEQRRQTLAALIQRFRAGVRDLPYQTTDSHSAIQPLIVGENSRALTLAEQLRERNMWVTAIRPPTVPAGTARLRLTLTAAHQTQDIDNVLEALYAAG.

Arginine 21 lines the substrate pocket. 108 to 109 (GF) provides a ligand contact to pyridoxal 5'-phosphate. Residue histidine 133 coordinates substrate. Residues serine 179, histidine 207, and threonine 233 each coordinate pyridoxal 5'-phosphate. Lysine 236 bears the N6-(pyridoxal phosphate)lysine mark. Threonine 352 contacts substrate.

It belongs to the class-II pyridoxal-phosphate-dependent aminotransferase family. BioF subfamily. As to quaternary structure, homodimer. The cofactor is pyridoxal 5'-phosphate.

It carries out the reaction 6-carboxyhexanoyl-[ACP] + L-alanine + H(+) = (8S)-8-amino-7-oxononanoate + holo-[ACP] + CO2. The protein operates within cofactor biosynthesis; biotin biosynthesis. Its function is as follows. Catalyzes the decarboxylative condensation of pimeloyl-[acyl-carrier protein] and L-alanine to produce 8-amino-7-oxononanoate (AON), [acyl-carrier protein], and carbon dioxide. The chain is 8-amino-7-oxononanoate synthase from Enterobacter sp. (strain 638).